A 143-amino-acid polypeptide reads, in one-letter code: Putative pre-16S rRNA nuclease (143 aa).

The protein belongs to the YqgF nuclease family.

The protein localises to the cytoplasm. In terms of biological role, could be a nuclease involved in processing of the 5'-end of pre-16S rRNA. This chain is Putative pre-16S rRNA nuclease, found in Leuconostoc mesenteroides subsp. mesenteroides (strain ATCC 8293 / DSM 20343 / BCRC 11652 / CCM 1803 / JCM 6124 / NCDO 523 / NBRC 100496 / NCIMB 8023 / NCTC 12954 / NRRL B-1118 / 37Y).